The following is a 97-amino-acid chain: Putative pterin-4-alpha-carbinolamine dehydratase (97 aa).

It belongs to the pterin-4-alpha-carbinolamine dehydratase family.

The catalysed reaction is (4aS,6R)-4a-hydroxy-L-erythro-5,6,7,8-tetrahydrobiopterin = (6R)-L-erythro-6,7-dihydrobiopterin + H2O. This chain is Putative pterin-4-alpha-carbinolamine dehydratase, found in Brucella abortus (strain S19).